Consider the following 182-residue polypeptide: IQ domain-containing protein F1 (182 aa).

Composition is skewed to basic and acidic residues over residues 1–10 and 31–43; these read MGEEQQKPEE and ETEK…KQEL. The disordered stretch occupies residues 1-43; the sequence is MGEEQQKPEELNAPTDDAPQEKQQPADLSSETEKAKSKKKQEL. 2 consecutive IQ domains span residues 45–74 and 101–130; these read EKDQ…SAWI and EQWA…AVRT.

As to quaternary structure, interacts with calmodulin. In terms of tissue distribution, specifically expressed in testes and mature spermatozoa (at protein level).

The protein resides in the cytoplasmic vesicle. Its subcellular location is the secretory vesicle. It is found in the acrosome. In terms of biological role, involved in sperm capacitation and acrosome reaction. The polypeptide is IQ domain-containing protein F1 (Mus musculus (Mouse)).